We begin with the raw amino-acid sequence, 367 residues long: Probable neutral protease 2 homolog MCYG_00239 (367 aa).

The N-terminal stretch at Met-1–Gly-19 is a signal peptide. A propeptide spanning residues Phe-20–Arg-190 is cleaved from the precursor. Cystine bridges form between Cys-198–Cys-268, Cys-275–Cys-293, and Cys-307–Cys-367. His-318 serves as a coordination point for Zn(2+). Glu-319 is an active-site residue. Residues His-322 and Asp-333 each coordinate Zn(2+).

The protein belongs to the peptidase M35 family. Zn(2+) is required as a cofactor.

It localises to the secreted. The catalysed reaction is Preferential cleavage of bonds with hydrophobic residues in P1'. Also 3-Asn-|-Gln-4 and 8-Gly-|-Ser-9 bonds in insulin B chain.. Functionally, probable secreted metalloprotease that shows high activities on basic nuclear substrates such as histone and protamine. May be involved in virulence. The protein is Probable neutral protease 2 homolog MCYG_00239 of Arthroderma otae (strain ATCC MYA-4605 / CBS 113480) (Microsporum canis).